We begin with the raw amino-acid sequence, 272 residues long: Shikimate dehydrogenase (NADP(+)) (272 aa).

Residues 14 to 16 and threonine 61 each bind shikimate; that span reads SKS. Lysine 65 (proton acceptor) is an active-site residue. Glutamate 77 provides a ligand contact to NADP(+). Asparagine 86 and aspartate 102 together coordinate shikimate. NADP(+) contacts are provided by residues 126 to 130, 149 to 154, and methionine 213; these read GAGGA and NRTASR. Tyrosine 215 contacts shikimate. Glycine 237 contributes to the NADP(+) binding site.

This sequence belongs to the shikimate dehydrogenase family. Homodimer.

The catalysed reaction is shikimate + NADP(+) = 3-dehydroshikimate + NADPH + H(+). It functions in the pathway metabolic intermediate biosynthesis; chorismate biosynthesis; chorismate from D-erythrose 4-phosphate and phosphoenolpyruvate: step 4/7. Its function is as follows. Involved in the biosynthesis of the chorismate, which leads to the biosynthesis of aromatic amino acids. Catalyzes the reversible NADPH linked reduction of 3-dehydroshikimate (DHSA) to yield shikimate (SA). The chain is Shikimate dehydrogenase (NADP(+)) from Salmonella paratyphi A (strain ATCC 9150 / SARB42).